A 309-amino-acid polypeptide reads, in one-letter code: Sulfate adenylyltransferase subunit 2 (309 aa).

Belongs to the PAPS reductase family. CysD subfamily. Heterodimer composed of CysD, the smaller subunit, and CysN.

The enzyme catalyses sulfate + ATP + H(+) = adenosine 5'-phosphosulfate + diphosphate. The protein operates within sulfur metabolism; hydrogen sulfide biosynthesis; sulfite from sulfate: step 1/3. In terms of biological role, with CysN forms the ATP sulfurylase (ATPS) that catalyzes the adenylation of sulfate producing adenosine 5'-phosphosulfate (APS) and diphosphate, the first enzymatic step in sulfur assimilation pathway. APS synthesis involves the formation of a high-energy phosphoric-sulfuric acid anhydride bond driven by GTP hydrolysis by CysN coupled to ATP hydrolysis by CysD. This Methylorubrum extorquens (strain CM4 / NCIMB 13688) (Methylobacterium extorquens) protein is Sulfate adenylyltransferase subunit 2.